The sequence spans 1031 residues: Zinc finger protein 445 (1031 aa).

Positions 1–43 (MPPGRWHAAYPAQAQSSRERGRLQTVKKEEEDESYTPVQAARP) are disordered. Basic and acidic residues predominate over residues 17 to 29 (SRERGRLQTVKKE). Lys28 is covalently cross-linked (Glycyl lysine isopeptide (Lys-Gly) (interchain with G-Cter in SUMO1)). The region spanning 55-137 (RQLFRQLRYH…ALLEELQRDL (83 aa)) is the SCAN box domain. The 71-residue stretch at 234-304 (MTFKDVEVTF…NMQAAQPKGN (71 aa)) folds into the KRAB domain. Glycyl lysine isopeptide (Lys-Gly) (interchain with G-Cter in SUMO2) cross-links involve residues Lys317, Lys374, Lys375, and Lys399. C2H2-type zinc fingers lie at residues 485–507 (FKCSDCGRTFSHSSHLAYHQRLH), 513–535 (FKCRVCGKAFRWSSNCARHEKIH), and 541–563 (YKCDLCEKAFRRLSAYRLHRETH). Lys567 is covalently cross-linked (Glycyl lysine isopeptide (Lys-Gly) (interchain with G-Cter in SUMO2)). C2H2-type zinc fingers lie at residues 597 to 619 (FDCSQCRKSFHCKSYVLEHQRIH) and 625 to 647 (YKCTKCRKTFRWRSNFTRHMRLH). Lys654 is covalently cross-linked (Glycyl lysine isopeptide (Lys-Gly) (interchain with G-Cter in SUMO2)). 2 C2H2-type zinc fingers span residues 681–703 (FLCQQCGKTFTRKKTLVDHQRIH) and 709–731 (YQCSDCGKDFAYRSAFIVHKKKH). Glycyl lysine isopeptide (Lys-Gly) (interchain with G-Cter in SUMO2) cross-links involve residues Lys736 and Lys758. C2H2-type zinc fingers lie at residues 762-784 (YKCSQCGKAFRNHSFLLIHQRVH), 790-812 (YKCRECGKAFRWSSNLYRHQRIH), 840-862 (FWCQECGKTFTRKRTLLDHKGIH), 868-890 (YKCNLCGKSYDRNYRLVNHQRIH), and 896-918 (FKCQWCGKEFIGRHTLSSHQRKH). The tract at residues 911–939 (LSSHQRKHTRAAQAERSPPARSSSQDTKL) is disordered. Residues Lys938, Lys956, and Lys975 each participate in a glycyl lysine isopeptide (Lys-Gly) (interchain with G-Cter in SUMO2) cross-link. 2 C2H2-type zinc fingers span residues 978-1000 (HKCSICGKTFNKSSQLISHKRFH) and 1006-1028 (FKCSKCGKTFRWSSNLARHMKNH).

The protein belongs to the krueppel C2H2-type zinc-finger protein family.

It is found in the nucleus. Transcription regulator required to maintain maternal and paternal gene imprinting, a process by which gene expression is restricted in a parent of origin-specific manner by epigenetic modification of genomic DNA and chromatin, including DNA methylation. Acts by controlling DNA methylation during the earliest multicellular stages of development at multiple imprinting control regions (ICRs). Acts together with ZFP57, but seems to be the major factor in human early embryonic imprinting maintenance. In contrast, in mice, ZFP57 plays the predominant role in imprinting maintenance. The chain is Zinc finger protein 445 from Homo sapiens (Human).